The primary structure comprises 575 residues: Transcription factor coe2 (575 aa).

Positions 63 to 66 (RKSN) are interaction with DNA. The C5-type zinc-finger motif lies at 151–170 (CRVLLTHEVMCSRCCEKKSC). 2 interaction with DNA regions span residues 197–204 (NCLKTAGN) and 236–239 (NNSK). Residues 254–336 (PCIKAISPSE…CKGAPGRFIY (83 aa)) enclose the IPT/TIG domain. The disordered stretch occupies residues 450–487 (IRNTSSISPRGYSSSSTPQQSNYSTPSNSMNGYSNVPM). The segment covering 454 to 476 (SSISPRGYSSSSTPQQSNYSTPS) has biased composition (low complexity). Positions 477-487 (NSMNGYSNVPM) are enriched in polar residues.

This sequence belongs to the COE family.

It is found in the nucleus. Its function is as follows. May play a pivotal role in the transcriptional cascade that specifies primary neurons in embryos. Stabilizes the higher neural potential of selected progenitor cells that express neurog2/X-ngnr-1 by maintaining Delta-Notch signaling. Thus ensures the transition between neural competence and irreversible commitment to a neural fate. Also promotes neuronal differentiation by activating neurod1 expression, directly or indirectly. This chain is Transcription factor coe2, found in Xenopus tropicalis (Western clawed frog).